The chain runs to 333 residues: Ornithine carbamoyltransferase (333 aa).

Residues 56–59, arginine 107, and 134–137 contribute to the carbamoyl phosphate site; these read STRT and HPTQ. Residues asparagine 167, aspartate 231, and 235 to 236 contribute to the L-ornithine site; that span reads SM. Residues 273-274 and arginine 318 contribute to the carbamoyl phosphate site; that span reads CL.

Belongs to the aspartate/ornithine carbamoyltransferase superfamily. OTCase family.

It localises to the cytoplasm. It catalyses the reaction carbamoyl phosphate + L-ornithine = L-citrulline + phosphate + H(+). It participates in amino-acid degradation; L-arginine degradation via ADI pathway; carbamoyl phosphate from L-arginine: step 2/2. Its function is as follows. Reversibly catalyzes the transfer of the carbamoyl group from carbamoyl phosphate (CP) to the N(epsilon) atom of ornithine (ORN) to produce L-citrulline. The chain is Ornithine carbamoyltransferase from Clostridium botulinum (strain Langeland / NCTC 10281 / Type F).